A 188-amino-acid chain; its full sequence is Mediator of RNA polymerase II transcription subunit 29 (188 aa).

Low complexity-rich tracts occupy residues 1-23 (MNPN…QSSP) and 30-43 (VQHQ…PLQQ). A disordered region spans residues 1 to 43 (MNPNMNMMPMSGPQMMQVMQSSPSGPPGPVQHQQQQPPQPLQQ).

This sequence belongs to the Mediator complex subunit 29 family. In terms of assembly, component of the Mediator complex. Self-associates. Interacts with dsx.

It localises to the nucleus. Component of the Mediator complex, a coactivator involved in the regulated transcription of nearly all RNA polymerase II-dependent genes. Mediator functions as a bridge to convey information from gene-specific regulatory proteins to the basal RNA polymerase II transcription machinery. Mediator is recruited to promoters by direct interactions with regulatory proteins and serves as a scaffold for the assembly of a functional preinitiation complex with RNA polymerase II and the general transcription factors. Required for female somatic sexual development. The protein is Mediator of RNA polymerase II transcription subunit 29 (ix) of Drosophila melanogaster (Fruit fly).